We begin with the raw amino-acid sequence, 285 residues long: Pantothenate synthetase (285 aa).

30-37 contributes to the ATP binding site; the sequence is MGNLHQGH. His37 serves as the catalytic Proton donor. Gln61 contacts (R)-pantoate. Gln61 contributes to the beta-alanine binding site. 149-152 lines the ATP pocket; it reads GQKD. Gln155 is a binding site for (R)-pantoate. ATP-binding positions include Val178 and 186–189; that span reads LSSR.

It belongs to the pantothenate synthetase family. Homodimer.

Its subcellular location is the cytoplasm. It carries out the reaction (R)-pantoate + beta-alanine + ATP = (R)-pantothenate + AMP + diphosphate + H(+). Its pathway is cofactor biosynthesis; (R)-pantothenate biosynthesis; (R)-pantothenate from (R)-pantoate and beta-alanine: step 1/1. Its function is as follows. Catalyzes the condensation of pantoate with beta-alanine in an ATP-dependent reaction via a pantoyl-adenylate intermediate. The sequence is that of Pantothenate synthetase from Aeromonas hydrophila subsp. hydrophila (strain ATCC 7966 / DSM 30187 / BCRC 13018 / CCUG 14551 / JCM 1027 / KCTC 2358 / NCIMB 9240 / NCTC 8049).